Consider the following 465-residue polypeptide: Argininosuccinate lyase (465 aa).

This sequence belongs to the lyase 1 family. Argininosuccinate lyase subfamily.

The protein resides in the cytoplasm. It carries out the reaction 2-(N(omega)-L-arginino)succinate = fumarate + L-arginine. The protein operates within amino-acid biosynthesis; L-arginine biosynthesis; L-arginine from L-ornithine and carbamoyl phosphate: step 3/3. This chain is Argininosuccinate lyase, found in Rhodopseudomonas palustris (strain ATCC BAA-98 / CGA009).